A 452-amino-acid polypeptide reads, in one-letter code: Bifunctional protein GlmU (452 aa).

The tract at residues 1 to 226 (MKNIHAIILA…KFEIAGVNDK (226 aa)) is pyrophosphorylase. UDP-N-acetyl-alpha-D-glucosamine is bound by residues 9-12 (LAAG), Lys23, Gln73, 78-79 (GT), 100-102 (YGD), Gly137, Glu151, Asn166, and Asn224. A Mg(2+)-binding site is contributed by Asp102. Asn224 serves as a coordination point for Mg(2+). The interval 227 to 247 (VQLAELERIFQINQATQFMQQ) is linker. Residues 248 to 452 (GLSLKDPNRF…LKNWQRPTKK (205 aa)) are N-acetyltransferase. Residues Arg330 and Lys348 each contribute to the UDP-N-acetyl-alpha-D-glucosamine site. His360 acts as the Proton acceptor in catalysis. Residues Tyr363 and Asn374 each contribute to the UDP-N-acetyl-alpha-D-glucosamine site. Acetyl-CoA is bound by residues Ala377, 383-384 (NY), Ser402, Ala420, and Arg437.

It in the N-terminal section; belongs to the N-acetylglucosamine-1-phosphate uridyltransferase family. The protein in the C-terminal section; belongs to the transferase hexapeptide repeat family. As to quaternary structure, homotrimer. Mg(2+) is required as a cofactor.

The protein localises to the cytoplasm. The catalysed reaction is alpha-D-glucosamine 1-phosphate + acetyl-CoA = N-acetyl-alpha-D-glucosamine 1-phosphate + CoA + H(+). It carries out the reaction N-acetyl-alpha-D-glucosamine 1-phosphate + UTP + H(+) = UDP-N-acetyl-alpha-D-glucosamine + diphosphate. It functions in the pathway nucleotide-sugar biosynthesis; UDP-N-acetyl-alpha-D-glucosamine biosynthesis; N-acetyl-alpha-D-glucosamine 1-phosphate from alpha-D-glucosamine 6-phosphate (route II): step 2/2. The protein operates within nucleotide-sugar biosynthesis; UDP-N-acetyl-alpha-D-glucosamine biosynthesis; UDP-N-acetyl-alpha-D-glucosamine from N-acetyl-alpha-D-glucosamine 1-phosphate: step 1/1. Its pathway is bacterial outer membrane biogenesis; LPS lipid A biosynthesis. In terms of biological role, catalyzes the last two sequential reactions in the de novo biosynthetic pathway for UDP-N-acetylglucosamine (UDP-GlcNAc). The C-terminal domain catalyzes the transfer of acetyl group from acetyl coenzyme A to glucosamine-1-phosphate (GlcN-1-P) to produce N-acetylglucosamine-1-phosphate (GlcNAc-1-P), which is converted into UDP-GlcNAc by the transfer of uridine 5-monophosphate (from uridine 5-triphosphate), a reaction catalyzed by the N-terminal domain. The chain is Bifunctional protein GlmU from Ruthia magnifica subsp. Calyptogena magnifica.